A 325-amino-acid chain; its full sequence is MATVNKTPVIVVPVIDRPPSETFPNLHEHINDQKFDDVKDNEVMPEKRNVVIVKDDPDHYKDYAFIHWTGGNIRNDDKYTHFFSGFCNTMCTEETKRNIARHLALWDSKFFTELENKKVEYVVIVENDNVIEDITFLRPVLKAMHDKKIDILQMREIITGNKVKTELVMDKNHVIFTYTGGYDVSLSAYIIRVTTALNIVDEIIKSGGLSSGFYFEIARIENEIKINRQIMDNSAKYVEHDPRLVAEHRFENMKPNFWSRIGTAAVKRYPGVMYAFTTPLISFFGLFDINVIGLIVILFIMFMLIFNVKSKLLWFLTGTFVTAFI.

Residues 1-285 lie on the Virion surface side of the membrane; it reads MATVNKTPVI…FTTPLISFFG (285 aa). The chain crosses the membrane as a helical; Signal-anchor span at residues 286-306; that stretch reads LFDINVIGLIVILFIMFMLIF. Over 307-325 the chain is Intravirion; it reads NVKSKLLWFLTGTFVTAFI.

This sequence belongs to the orthopoxvirus OPG108 family. In terms of processing, does not contain disulfide bonds.

It localises to the virion membrane. Functionally, envelope protein that binds to heparan sulfate on the cell surface and might provide virion attachment to target cell. The protein is Envelope protein H3 (OPG108) of Variola virus (isolate Human/India/Ind3/1967) (VARV).